The following is a 363-amino-acid chain: Pyruvate dehydrogenase E1 component subunit beta-1, mitochondrial (363 aa).

Residues 1–29 (MLGILRQRAIDGASTLRRTRFALVSARSY) constitute a mitochondrion transit peptide. Position 92 (E92) interacts with thiamine diphosphate. I145, A193, I194, and D196 together coordinate K(+). Glycyl lysine isopeptide (Lys-Gly) (interchain with G-Cter in ubiquitin) cross-links involve residues K247 and K254.

As to quaternary structure, tetramer of 2 alpha and 2 beta subunits. The cofactor is thiamine diphosphate. Expressed in roots, immature rosettes, and mature rosettes.

It localises to the mitochondrion matrix. It catalyses the reaction N(6)-[(R)-lipoyl]-L-lysyl-[protein] + pyruvate + H(+) = N(6)-[(R)-S(8)-acetyldihydrolipoyl]-L-lysyl-[protein] + CO2. Functionally, the pyruvate dehydrogenase complex catalyzes the overall conversion of pyruvate to acetyl-CoA and CO(2). It contains multiple copies of three enzymatic components: pyruvate dehydrogenase (E1), dihydrolipoamide acetyltransferase (E2) and lipoamide dehydrogenase (E3). The protein is Pyruvate dehydrogenase E1 component subunit beta-1, mitochondrial (PDH2) of Arabidopsis thaliana (Mouse-ear cress).